The sequence spans 421 residues: UPF0415 protein C7orf25 homolog (421 aa).

This sequence belongs to the UPF0415 family.

The protein is UPF0415 protein C7orf25 homolog of Bos taurus (Bovine).